The primary structure comprises 75 residues: Phytosulfokines 3 (75 aa).

Residues 1–22 form the signal peptide; the sequence is MSPKVIAICLVALLLPISISHG. Positions 23–66 are excised as a propeptide; the sequence is GRIGPIEPSKASSKVVERGNYDGRVEGCEEDDCLVERLLVAHLD. Residues Tyr-67 and Tyr-69 each carry the sulfotyrosine modification. Residues 72–75 constitute a propeptide that is removed on maturation; that stretch reads GKHN.

The protein belongs to the phytosulfokine family. Post-translationally, sulfation is important for activity and for the binding to a putative membrane receptor. PSK-alpha is produced by endopeptidase digestion. PSK-beta is produced from PSK-alpha by exopeptidase digestion.

The protein resides in the secreted. In terms of biological role, promotes plant cell differentiation, organogenesis and somatic embryogenesis as well as cell proliferation. The polypeptide is Phytosulfokines 3 (PSK3) (Oryza sativa subsp. japonica (Rice)).